A 764-amino-acid chain; its full sequence is Protein sey1 (764 aa).

The Cytoplasmic segment spans residues 1–659 (MQQSAQLITE…KRSIISTATR (659 aa)). Residues 31-246 (GFDYHVVAVL…NPKYLFKPCY (216 aa)) form the GB1/RHD3-type G domain. 41-48 (GSQSTGKS) is a GTP binding site. Coiled-coil stretches lie at residues 302-322 (EELL…QRLE) and 421-443 (DAEQ…MREE). A helical membrane pass occupies residues 660 to 680 (VPGYFWALLAVLGWNEFVSVL). At 681–683 (KNP) the chain is on the lumenal side. Residues 684–704 (VLLTLLLIVVSFLFILVQTGL) traverse the membrane as a helical segment. The Cytoplasmic portion of the chain corresponds to 705–764 (AGPVKAFAERSVRNAVNSMGEKLAEKLDDYRSTSPASETTSGRVISAENSSVDEKVSTTP). A disordered region spans residues 731 to 764 (LDDYRSTSPASETTSGRVISAENSSVDEKVSTTP). Positions 736-754 (STSPASETTSGRVISAENS) are enriched in polar residues.

The protein belongs to the TRAFAC class dynamin-like GTPase superfamily. GB1/RHD3 GTPase family. RHD3 subfamily.

It is found in the endoplasmic reticulum membrane. Cooperates with the reticulon proteins and tubule-shaping DP1 family proteins to generate and maintain the structure of the tubular endoplasmic reticulum network. Has GTPase activity, which is required for its function in ER organization. The protein is Protein sey1 (sey1) of Schizosaccharomyces japonicus (strain yFS275 / FY16936) (Fission yeast).